Consider the following 607-residue polypeptide: Albumin (607 aa).

The first 18 residues, 1–18 (MKWVTFVSLLFLFSSAYS), serve as a signal peptide directing secretion. Residues 19-24 (RGVLRR) constitute a propeptide that is removed on maturation. Albumin domains lie at 19–209 (RGVL…DALK), 210–402 (ERIL…QFTP), and 403–600 (LVEE…KLVA). H27 provides a ligand contact to Cu cation. Position 29 is a phosphoserine (S29). Ca(2+)-binding residues include E30 and D37. C77 and C86 are joined by a disulfide. S82 and S89 each carry phosphoserine. Residue H91 coordinates Zn(2+). Cystine bridges form between C99/C115, C114/C125, C147/C192, C191/C200, C223/C269, and C268/C276. Residue T107 is modified to Phosphothreonine. E267 is a Ca(2+) binding site. Residues H270 and D272 each coordinate Zn(2+). Residues D272, E275, D278, and D282 each contribute to the Ca(2+) site. Cystine bridges form between C288-C302, C301-C312, C339-C384, C383-C392, C415-C461, C460-C471, C484-C500, and C499-C510. S442 is modified (phosphoserine). Residues T443 and T445 each carry the phosphothreonine modification. S512 bears the Phosphoserine mark. 2 cysteine pairs are disulfide-bonded: C537–C582 and C581–C590. K557 carries the N6-methyllysine modification. Position 569 is a phosphothreonine (T569). N6-succinyllysine is present on K587.

It belongs to the ALB/AFP/VDB family. In terms of assembly, interacts with FCGRT; this interaction regulates ALB homeostasis. Interacts with TASOR. In plasma, occurs in a covalently-linked complex with chromophore-bound alpha-1-microglobulin; this interaction does not prevent fatty acid binding to ALB. Post-translationally, phosphorylated by FAM20C in the extracellular medium. As to expression, plasma.

The protein localises to the secreted. Binds water, Ca(2+), Na(+), K(+), fatty acids, hormones, bilirubin and drugs. Its main function is the regulation of the colloidal osmotic pressure of blood. Major zinc transporter in plasma, typically binds about 80% of all plasma zinc. Major calcium and magnesium transporter in plasma, binds approximately 45% of circulating calcium and magnesium in plasma. Potentially has more than two calcium-binding sites and might additionally bind calcium in a non-specific manner. The shared binding site between zinc and calcium at residue Asp-272 suggests a crosstalk between zinc and calcium transport in the blood. The rank order of affinity is zinc &gt; calcium &gt; magnesium. Binds to the bacterial siderophore enterobactin and inhibits enterobactin-mediated iron uptake of E.coli from ferric transferrin, and may thereby limit the utilization of iron and growth of enteric bacteria such as E.coli. Does not prevent iron uptake by the bacterial siderophore aerobactin. The polypeptide is Albumin (ALB) (Equus caballus (Horse)).